The chain runs to 179 residues: Ribosome maturation factor RimM (179 aa).

The PRC barrel domain maps to Glu103–Leu176.

Belongs to the RimM family. In terms of assembly, binds ribosomal protein uS19.

The protein resides in the cytoplasm. Functionally, an accessory protein needed during the final step in the assembly of 30S ribosomal subunit, possibly for assembly of the head region. Essential for efficient processing of 16S rRNA. May be needed both before and after RbfA during the maturation of 16S rRNA. It has affinity for free ribosomal 30S subunits but not for 70S ribosomes. The protein is Ribosome maturation factor RimM of Mycobacterium leprae (strain Br4923).